The sequence spans 457 residues: Bifunctional protein GlmU (457 aa).

The pyrophosphorylase stretch occupies residues 1–230; sequence MSKRYAVVLA…FEESLGVNDR (230 aa). UDP-N-acetyl-alpha-D-glucosamine-binding positions include 9 to 12, Lys-23, Gln-73, and 78 to 79; these read LAAG and GT. Residue Asp-103 coordinates Mg(2+). 4 residues coordinate UDP-N-acetyl-alpha-D-glucosamine: Gly-140, Glu-155, Asn-170, and Asn-228. Residue Asn-228 participates in Mg(2+) binding. The segment at 231-251 is linker; the sequence is IALAEASRLMQRRINENHMRN. Residues 252–457 are N-acetyltransferase; the sequence is GVTLVNPENT…GYAKHLNHGK (206 aa). UDP-N-acetyl-alpha-D-glucosamine-binding residues include Arg-333 and Lys-351. His-363 (proton acceptor) is an active-site residue. Tyr-366 and Asn-377 together coordinate UDP-N-acetyl-alpha-D-glucosamine. Acetyl-CoA contacts are provided by residues 386–387, Ala-423, and Arg-440; that span reads NY.

The protein in the N-terminal section; belongs to the N-acetylglucosamine-1-phosphate uridyltransferase family. This sequence in the C-terminal section; belongs to the transferase hexapeptide repeat family. In terms of assembly, homotrimer. Mg(2+) is required as a cofactor.

Its subcellular location is the cytoplasm. It carries out the reaction alpha-D-glucosamine 1-phosphate + acetyl-CoA = N-acetyl-alpha-D-glucosamine 1-phosphate + CoA + H(+). The catalysed reaction is N-acetyl-alpha-D-glucosamine 1-phosphate + UTP + H(+) = UDP-N-acetyl-alpha-D-glucosamine + diphosphate. Its pathway is nucleotide-sugar biosynthesis; UDP-N-acetyl-alpha-D-glucosamine biosynthesis; N-acetyl-alpha-D-glucosamine 1-phosphate from alpha-D-glucosamine 6-phosphate (route II): step 2/2. It participates in nucleotide-sugar biosynthesis; UDP-N-acetyl-alpha-D-glucosamine biosynthesis; UDP-N-acetyl-alpha-D-glucosamine from N-acetyl-alpha-D-glucosamine 1-phosphate: step 1/1. The protein operates within bacterial outer membrane biogenesis; LPS lipid A biosynthesis. Its function is as follows. Catalyzes the last two sequential reactions in the de novo biosynthetic pathway for UDP-N-acetylglucosamine (UDP-GlcNAc). The C-terminal domain catalyzes the transfer of acetyl group from acetyl coenzyme A to glucosamine-1-phosphate (GlcN-1-P) to produce N-acetylglucosamine-1-phosphate (GlcNAc-1-P), which is converted into UDP-GlcNAc by the transfer of uridine 5-monophosphate (from uridine 5-triphosphate), a reaction catalyzed by the N-terminal domain. This Listeria monocytogenes serotype 4b (strain F2365) protein is Bifunctional protein GlmU.